A 190-amino-acid polypeptide reads, in one-letter code: Potassium-transporting ATPase KdpC subunit (190 aa).

A helical membrane pass occupies residues 10 to 30; it reads VLLLVLTGLTGFAYPLLSTAI.

The protein belongs to the KdpC family. The system is composed of three essential subunits: KdpA, KdpB and KdpC.

It is found in the cell inner membrane. Functionally, part of the high-affinity ATP-driven potassium transport (or Kdp) system, which catalyzes the hydrolysis of ATP coupled with the electrogenic transport of potassium into the cytoplasm. This subunit acts as a catalytic chaperone that increases the ATP-binding affinity of the ATP-hydrolyzing subunit KdpB by the formation of a transient KdpB/KdpC/ATP ternary complex. The polypeptide is Potassium-transporting ATPase KdpC subunit (Sorangium cellulosum (strain So ce56) (Polyangium cellulosum (strain So ce56))).